The following is a 247-amino-acid chain: Carboxy-S-adenosyl-L-methionine synthase (247 aa).

S-adenosyl-L-methionine is bound by residues Tyr39, 64–66, 117–118, Asn132, and Arg199; these read GCS and DI.

It belongs to the class I-like SAM-binding methyltransferase superfamily. Cx-SAM synthase family. In terms of assembly, homodimer.

It catalyses the reaction prephenate + S-adenosyl-L-methionine = carboxy-S-adenosyl-L-methionine + 3-phenylpyruvate + H2O. Functionally, catalyzes the conversion of S-adenosyl-L-methionine (SAM) to carboxy-S-adenosyl-L-methionine (Cx-SAM). The protein is Carboxy-S-adenosyl-L-methionine synthase of Aeromonas salmonicida (strain A449).